Here is a 507-residue protein sequence, read N- to C-terminus: Kunitz-type protease inhibitor 1 (507 aa).

Residues 1 to 29 (MAGRRLARASISAVGVWLLCALGLQATEA) form the signal peptide. The MANSC domain maps to 51 to 134 (GVPSFVLDTE…FAPKEGFINY (84 aa)). Residue asparagine 229 is glycosylated (N-linked (GlcNAc...) asparagine). Residues 244–294 (CLASYKVGRCRGSFPRWYYDPKEQICKSFTFGGCLGNKNNYLREEECMLAC) enclose the BPTI/Kunitz inhibitor 1 domain. Cystine bridges form between cysteine 244–cysteine 294, cysteine 253–cysteine 277, cysteine 269–cysteine 290, cysteine 320–cysteine 338, cysteine 332–cysteine 347, cysteine 369–cysteine 419, cysteine 378–cysteine 402, and cysteine 394–cysteine 415. The 37-residue stretch at 312–348 (SCHATQFRCSNGCCIDGFLECDDTPDCPDGSDEATCE) folds into the LDL-receptor class A domain. The BPTI/Kunitz inhibitor 2 domain occupies 369-419 (CAELPDTGFCKENIPRWYYNPFSERCARFTYGGCYGNKNNFEEEQQCLESC). Asparagine 501 carries N-linked (GlcNAc...) asparagine glycosylation.

Interacts with HGFAC. Interacts with TMPRSS13; the interaction promotes the phosphorylation and cell membrane localization of TMPRSS13.

It localises to the secreted. It is found in the cytoplasm. The protein resides in the cell membrane. Its function is as follows. Inhibitor of HGFAC. Inhibits serine protease activity of ST14/matriptase in vitro. Inhibits serine protease activity of TMPRSS13, via the BPTI/Kunitz inhibitor 1 domain. The chain is Kunitz-type protease inhibitor 1 (Spint1) from Mus musculus (Mouse).